The primary structure comprises 438 residues: Transcription termination factor Rho (438 aa).

In terms of domain architecture, Rho RNA-BD spans Tyr-70–Pro-145. ATP contacts are provided by residues Gly-188–Ala-193, Arg-200–Glu-205, and Arg-231.

It belongs to the Rho family. Homohexamer. The homohexamer assembles into an open ring structure.

Facilitates transcription termination by a mechanism that involves Rho binding to the nascent RNA, activation of Rho's RNA-dependent ATPase activity, and release of the mRNA from the DNA template. This is Transcription termination factor Rho from Helicobacter pylori (strain J99 / ATCC 700824) (Campylobacter pylori J99).